The primary structure comprises 160 residues: Lymphocyte antigen 96 (160 aa).

Residues 1–18 (MLPFLFFSTLFSSIFTEA) form the signal peptide. Disulfide bonds link Cys25–Cys51, Cys37–Cys148, and Cys95–Cys105. A glycan (N-linked (GlcNAc...) asparagine) is linked at Asn26. Asn114 carries an N-linked (GlcNAc...) asparagine glycan. Positions 119–123 (FSFKG) are interaction with lipopolysaccharide.

In terms of assembly, heterogeneous homomer formed from homodimers; disulfide-linked. Belongs to the lipopolysaccharide (LPS) receptor, a multi-protein complex containing at least CD14, LY96 and TLR4. Binds to the extracellular domains of TLR2 and TLR4. Ligand binding induces interaction with TLR4 and oligomerization of the complex. Post-translationally, N-glycosylated; high-mannose.

It is found in the secreted. Its subcellular location is the extracellular space. Binds bacterial lipopolysaccharide (LPS). Cooperates with TLR4 in the innate immune response to bacterial lipopolysaccharide (LPS), and with TLR2 in the response to cell wall components from Gram-positive and Gram-negative bacteria. Enhances TLR4-dependent activation of NF-kappa-B. Cells expressing both LY96 and TLR4, but not TLR4 alone, respond to LPS. The polypeptide is Lymphocyte antigen 96 (LY96) (Homo sapiens (Human)).